A 2614-amino-acid chain; its full sequence is Talin-B (2614 aa).

One can recognise an FERM domain in the interval 85–369 (RPLKVRLMDE…GYIEILMKKR (285 aa)). A disordered region spans residues 393–421 (RGQTSQATTSSSLSGYDGNGGREGQYSAP). Over residues 395 to 406 (QTSQATTSSSLS) the composition is skewed to low complexity. 2 coiled-coil regions span residues 1938–1965 (TQNIQEQVGKLAQDLKDSKNQLAEASGK) and 2033–2057 (NKAILDKSSQELEESIDSLANLVQS). Residues 2219 to 2460 (LLFAAGESLE…SIRKKEYSDQ (242 aa)) enclose the I/LWEQ domain. Residues 2454–2557 (KKEYSDQTGN…AAPTAAAPNK (104 aa)) form a disordered region. A compositionally biased stretch (polar residues) spans 2473 to 2487 (KPTTSISVGITPTKR). Residues 2517 to 2537 (KKPAPSQAPSSPVAPVSAPVS) show a composition bias toward low complexity. The span at 2538–2548 (KPSPKPAPKPA) shows a compositional bias: pro residues. The region spanning 2553–2614 (AAPNKTYTLE…NNIKTKLGLF (62 aa)) is the HP domain.

It is found in the cytoplasm. Its subcellular location is the cytoskeleton. It localises to the cell cortex. Its function is as follows. Actin-binding protein required for multicellular morphogenesis. Substrate of pkgB and/or pkbA. This Dictyostelium discoideum (Social amoeba) protein is Talin-B (talB).